We begin with the raw amino-acid sequence, 236 residues long: Ribose-5-phosphate isomerase A (236 aa).

Substrate contacts are provided by residues 31-34 (TGST), 84-87 (DGAD), and 97-100 (KGGG). Glutamate 106 functions as the Proton acceptor in the catalytic mechanism. Lysine 124 lines the substrate pocket.

This sequence belongs to the ribose 5-phosphate isomerase family. In terms of assembly, homodimer.

The catalysed reaction is aldehydo-D-ribose 5-phosphate = D-ribulose 5-phosphate. Its pathway is carbohydrate degradation; pentose phosphate pathway; D-ribose 5-phosphate from D-ribulose 5-phosphate (non-oxidative stage): step 1/1. Functionally, catalyzes the reversible conversion of ribose-5-phosphate to ribulose 5-phosphate. This is Ribose-5-phosphate isomerase A from Polynucleobacter necessarius subsp. necessarius (strain STIR1).